Here is a 170-residue protein sequence, read N- to C-terminus: Putative 4-hydroxy-4-methyl-2-oxoglutarate aldolase (170 aa).

Substrate contacts are provided by residues Gly81–Ile84 and Arg103. Residue Asp104 coordinates a divalent metal cation.

Belongs to the class II aldolase/RraA-like family. Homotrimer. Requires a divalent metal cation as cofactor.

It catalyses the reaction 4-hydroxy-4-methyl-2-oxoglutarate = 2 pyruvate. The catalysed reaction is oxaloacetate + H(+) = pyruvate + CO2. Functionally, catalyzes the aldol cleavage of 4-hydroxy-4-methyl-2-oxoglutarate (HMG) into 2 molecules of pyruvate. Also contains a secondary oxaloacetate (OAA) decarboxylase activity due to the common pyruvate enolate transition state formed following C-C bond cleavage in the retro-aldol and decarboxylation reactions. The polypeptide is Putative 4-hydroxy-4-methyl-2-oxoglutarate aldolase (Corynebacterium efficiens (strain DSM 44549 / YS-314 / AJ 12310 / JCM 11189 / NBRC 100395)).